Consider the following 741-residue polypeptide: Phosphoribosylformylglycinamidine synthase subunit PurL (741 aa).

Residue H54 is part of the active site. 2 residues coordinate ATP: Y57 and K96. Residue E98 participates in Mg(2+) binding. Substrate is bound by residues 99–102 (SHNH) and R121. H100 serves as the catalytic Proton acceptor. Residue D122 coordinates Mg(2+). Q245 provides a ligand contact to substrate. Mg(2+) is bound at residue D273. Residue 317–319 (ESQ) coordinates substrate. Residues D500 and G537 each coordinate ATP. N538 contacts Mg(2+). Substrate is bound at residue S540.

The protein belongs to the FGAMS family. Monomer. Part of the FGAM synthase complex composed of 1 PurL, 1 PurQ and 2 PurS subunits.

The protein resides in the cytoplasm. It carries out the reaction N(2)-formyl-N(1)-(5-phospho-beta-D-ribosyl)glycinamide + L-glutamine + ATP + H2O = 2-formamido-N(1)-(5-O-phospho-beta-D-ribosyl)acetamidine + L-glutamate + ADP + phosphate + H(+). Its pathway is purine metabolism; IMP biosynthesis via de novo pathway; 5-amino-1-(5-phospho-D-ribosyl)imidazole from N(2)-formyl-N(1)-(5-phospho-D-ribosyl)glycinamide: step 1/2. Functionally, part of the phosphoribosylformylglycinamidine synthase complex involved in the purines biosynthetic pathway. Catalyzes the ATP-dependent conversion of formylglycinamide ribonucleotide (FGAR) and glutamine to yield formylglycinamidine ribonucleotide (FGAM) and glutamate. The FGAM synthase complex is composed of three subunits. PurQ produces an ammonia molecule by converting glutamine to glutamate. PurL transfers the ammonia molecule to FGAR to form FGAM in an ATP-dependent manner. PurS interacts with PurQ and PurL and is thought to assist in the transfer of the ammonia molecule from PurQ to PurL. This Shouchella clausii (strain KSM-K16) (Alkalihalobacillus clausii) protein is Phosphoribosylformylglycinamidine synthase subunit PurL.